Here is a 324-residue protein sequence, read N- to C-terminus: Chorismate mutase 1, chloroplastic (324 aa).

The N-terminal 56 residues, 1–56, are a transit peptide targeting the chloroplast; the sequence is METQLLRFPSHTITSSITTNSSRNTTPFLPHKKWSHFVKFQLVNSSSSIKHGIRPL. R70 is a binding site for L-phenylalanine. The region spanning 70 to 324 is the Chorismate mutase domain; the sequence is RVDETESYTL…QVQYLLRRLD (255 aa). Residues R141 and 202-205 contribute to the L-tyrosine site; that span reads NYGS. An L-phenylalanine-binding site is contributed by 202 to 205; sequence NYGS.

Homodimer. Mostly expressed in petal tubes and petal limbs, and, to a lower extent, in stigmas, anthers, sepals, roots, stems and leaves.

Its subcellular location is the plastid. The protein localises to the chloroplast stroma. It catalyses the reaction chorismate = prephenate. The protein operates within metabolic intermediate biosynthesis; prephenate biosynthesis; prephenate from chorismate: step 1/1. Its activity is regulated as follows. Allosterically activated by tryptophan but not by tyrosine and phenylalanine. In terms of biological role, component of the floral volatile benzenoid/phenylpropanoid (FVBPs) biosynthetic pathway. Mediates the conversion of chorismate to prephenate, thus coupling metabolites from the shikimate pathway to the synthesis of FVBPs in the corolla. This chain is Chorismate mutase 1, chloroplastic, found in Petunia hybrida (Petunia).